We begin with the raw amino-acid sequence, 164 residues long: MARGLGEGDPQENDESNGDPPHNTDERSDGDDGPTPYLPVTLLNAGPFGPYNPYCLLGHPVQESGCPGRPTALSGAVGLPTPSGSRSSSHLSTPVGLSAVRVSGCGGAGSEEHVYAEVGSLHSEHEQEGDKCTDCSVTILLLLVIIVLLLIIIGLMLVIMFKKM.

Residues 1–41 form a disordered region; that stretch reads MARGLGEGDPQENDESNGDPPHNTDERSDGDDGPTPYLPVT. A zinc finger spans residues 122–135; that stretch reads HSEHEQEGDKCTDC. A helical membrane pass occupies residues 136-161; it reads SVTILLLLVIIVLLLIIIGLMLVIMF.

The protein resides in the membrane. Its function is as follows. Stp is required for transformation, but it is not required for replication of the virus. The T-lymphocyte is the target cell for transformation by herpesvirus saimiri. The polypeptide is Transforming protein STP (1) (Saimiriine herpesvirus 2 (strain 11) (SaHV-2)).